A 528-amino-acid chain; its full sequence is Phosphoenolpyruvate carboxykinase (ATP) (528 aa).

3 residues coordinate substrate: arginine 54, tyrosine 190, and lysine 196. Residues lysine 196, histidine 215, and glycine 231–threonine 239 contribute to the ATP site. 2 residues coordinate Mn(2+): lysine 196 and histidine 215. Aspartate 252 contributes to the Mn(2+) binding site. Positions 280, 316, and 441 each coordinate ATP. A substrate-binding site is contributed by arginine 316.

Belongs to the phosphoenolpyruvate carboxykinase (ATP) family. The cofactor is Mn(2+).

The protein localises to the cytoplasm. It catalyses the reaction oxaloacetate + ATP = phosphoenolpyruvate + ADP + CO2. It functions in the pathway carbohydrate biosynthesis; gluconeogenesis. Functionally, involved in the gluconeogenesis. Catalyzes the conversion of oxaloacetate (OAA) to phosphoenolpyruvate (PEP) through direct phosphoryl transfer between the nucleoside triphosphate and OAA. The protein is Phosphoenolpyruvate carboxykinase (ATP) of Sulfurimonas denitrificans (strain ATCC 33889 / DSM 1251) (Thiomicrospira denitrificans (strain ATCC 33889 / DSM 1251)).